The chain runs to 86 residues: Heat shock factor-binding protein (86 aa).

A coiled-coil region spans residues 34-63; the sequence is MSDSIITKIDDMGGRINELEQSINDLRAEM. Residues 42-52 are required for interactions with heat shock factors (HSFs); the sequence is IDDMGGRINEL. The segment at 59–86 is disordered; the sequence is LRAEMGVEGTPPPASKSGDEPKTPASSS.

The protein belongs to the HSBP1 family. In terms of assembly, homohexamer. Interacts with HSFA1A, HSFA1B and HSFA2. As to expression, mostly expressed in siliques and flowers, and, to a lower extent, in roots, stems and leaves.

It localises to the nucleus. The protein localises to the cytoplasm. It is found in the cytosol. Functionally, negative regulator of the heat shock (HS) response. Affects negatively HSFA1B DNA-binding capacity in vitro. Involved in acquired thermotolerance but not basal thermotolerance. Crucial for seed development, after fertilization and during embryogenesis. In Arabidopsis thaliana (Mouse-ear cress), this protein is Heat shock factor-binding protein.